The chain runs to 237 residues: Aspartate/glutamate leucyltransferase (237 aa).

This sequence belongs to the R-transferase family. Bpt subfamily.

It localises to the cytoplasm. It catalyses the reaction N-terminal L-glutamyl-[protein] + L-leucyl-tRNA(Leu) = N-terminal L-leucyl-L-glutamyl-[protein] + tRNA(Leu) + H(+). The enzyme catalyses N-terminal L-aspartyl-[protein] + L-leucyl-tRNA(Leu) = N-terminal L-leucyl-L-aspartyl-[protein] + tRNA(Leu) + H(+). Functions in the N-end rule pathway of protein degradation where it conjugates Leu from its aminoacyl-tRNA to the N-termini of proteins containing an N-terminal aspartate or glutamate. In Marinobacter nauticus (strain ATCC 700491 / DSM 11845 / VT8) (Marinobacter aquaeolei), this protein is Aspartate/glutamate leucyltransferase.